We begin with the raw amino-acid sequence, 502 residues long: Probable cytosol aminopeptidase (502 aa).

Mn(2+) contacts are provided by K269 and D274. K281 is an active-site residue. Residues D292, D351, and E353 each contribute to the Mn(2+) site. R355 is a catalytic residue.

The protein belongs to the peptidase M17 family. The cofactor is Mn(2+).

Its subcellular location is the cytoplasm. It carries out the reaction Release of an N-terminal amino acid, Xaa-|-Yaa-, in which Xaa is preferably Leu, but may be other amino acids including Pro although not Arg or Lys, and Yaa may be Pro. Amino acid amides and methyl esters are also readily hydrolyzed, but rates on arylamides are exceedingly low.. The catalysed reaction is Release of an N-terminal amino acid, preferentially leucine, but not glutamic or aspartic acids.. Presumably involved in the processing and regular turnover of intracellular proteins. Catalyzes the removal of unsubstituted N-terminal amino acids from various peptides. In Vibrio vulnificus (strain CMCP6), this protein is Probable cytosol aminopeptidase.